The primary structure comprises 311 residues: Protoheme IX farnesyltransferase 1 (311 aa).

The next 9 helical transmembrane spans lie at 31–51 (VMALAVFTAFVGLMVAPGAVN), 52–72 (PVIAVIAIAAIAIGAGAAGAL), 97–117 (VTPGEALGFGLVLSALSVMTL), 119–139 (VLVGWLAASLLAFTIFFYIVI), 152–172 (IVIGGAAGALPPVIGWAAATG), 179–199 (LVLFLIIFLWTPPHFWALALF), 225–245 (ILAYALLLAPVGVLPWAFGFT), 247–267 (GYYGIASAALGVGFIWHSWKV), and 281–301 (LFAYSIVYLFAVFAALLADTI).

It belongs to the UbiA prenyltransferase family. Protoheme IX farnesyltransferase subfamily.

It is found in the cell inner membrane. It catalyses the reaction heme b + (2E,6E)-farnesyl diphosphate + H2O = Fe(II)-heme o + diphosphate. The protein operates within porphyrin-containing compound metabolism; heme O biosynthesis; heme O from protoheme: step 1/1. Converts heme B (protoheme IX) to heme O by substitution of the vinyl group on carbon 2 of heme B porphyrin ring with a hydroxyethyl farnesyl side group. This Mesorhizobium japonicum (strain LMG 29417 / CECT 9101 / MAFF 303099) (Mesorhizobium loti (strain MAFF 303099)) protein is Protoheme IX farnesyltransferase 1.